The chain runs to 351 residues: DNA polymerase IV (351 aa).

Residues 4-185 enclose the UmuC domain; sequence IIHVDMDCFF…LPLAKIPGVG (182 aa). Asp-8 and Asp-103 together coordinate Mg(2+). Residue Glu-104 is part of the active site.

It belongs to the DNA polymerase type-Y family. As to quaternary structure, monomer. Mg(2+) is required as a cofactor.

Its subcellular location is the cytoplasm. It catalyses the reaction DNA(n) + a 2'-deoxyribonucleoside 5'-triphosphate = DNA(n+1) + diphosphate. Poorly processive, error-prone DNA polymerase involved in untargeted mutagenesis. Copies undamaged DNA at stalled replication forks, which arise in vivo from mismatched or misaligned primer ends. These misaligned primers can be extended by PolIV. Exhibits no 3'-5' exonuclease (proofreading) activity. May be involved in translesional synthesis, in conjunction with the beta clamp from PolIII. This chain is DNA polymerase IV, found in Escherichia coli O139:H28 (strain E24377A / ETEC).